Reading from the N-terminus, the 508-residue chain is Cytochrome P450 monooxygenase dmxR5 (508 aa).

Residues 24-44 (LTLGLGAILVVLMSFLAFLSY) traverse the membrane as a helical segment. Asparagine 387 and asparagine 405 each carry an N-linked (GlcNAc...) asparagine glycan. Cysteine 451 is a heme binding site. Residue asparagine 462 is glycosylated (N-linked (GlcNAc...) asparagine). The interval 481–508 (EHKKSTQESGHGVPLPSKLSKFSPREEN) is disordered.

Belongs to the cytochrome P450 family. Heme serves as cofactor.

It is found in the membrane. The protein operates within secondary metabolite biosynthesis. In terms of biological role, cytochrome P450 monooxygenase; part of the gene cluster that mediates the biosynthesis of the dimeric xanthones cryptosporioptides. The pathway begins with the synthesis of atrochrysone thioester by the polyketide synthase dmx-nrPKS. The atrochrysone carboxyl ACP thioesterase dmxR1 then breaks the thioester bond and releases the atrochrysone carboxylic acid from dmx-nrPKS. Atrochrysone carboxylic acid is decarboxylated by the decarboxylase dmxR15, and oxidized by the anthrone oxygenase dmxR16 to yield emodin. Emodin is then reduced to emodin hydroquinone by the oxidoreductase dmxR7. A-ring reduction by the short chain dehydrogenase dmxR18, dehydration by the scytalone dehydratase-like protein dmxR17 and probable spontaneous re-oxidation, results in overall deoxygenation to chrysophanol. Baeyer-Villiger oxidation by the Baeyer-Villiger monooxygenase (BVMO) dmxR6 then yields monodictylactone in equilibrium with monodictyphenone. In the case of the cryptosporioptides biosynthesis, monodictylactone is reduced at C-12 to an alcohol (by the short chain dehydrogenases dmxR12 or dmxR8) and hydroxylated at C-5 by dmxR9, yielding the electron-rich aromatic which could eliminate H(2)O to form the ortho-quinonemethide, followed by tautomerisation to paraquinone and complete the formal reduction to produce the 10-methylgroup. Conjugate addition of C-4a-OH to the resulting paraquinone by the monooxygenase dmxR10 then gives cyclohexadienone, which is then reduced at C-5 by the short chain dehydrogenase dmxR3 to give the dihydroxanthone. The 6,7-epoxide in the cryptosporioptides could be introduced by the cytochrome P450 monooxygenase dmxL3. The highly reducing PKS dmxL2 manufactures butyrate, which is further carboxylated by dmxL1 to form ethylmalonate. It is not yet clear whether the carboxylation occurs while the butyrate is attached to the ACP of dmxL2, but this unusual fungal metabolite could then be esterified to O-5 by the O-acetyltransferase dmxR13. Finally, dimerization performed by dmxR5 gives the observed dimers cryptosporioptides A, B and C as the final products of the pathway. This Cryptosporiopsis sp. (strain 8999) protein is Cytochrome P450 monooxygenase dmxR5.